The primary structure comprises 149 residues: MLNIKIVRLHPLATLPAYATAHAAGMDVAACLEAPVSVAPFSTALIPTGFALELPIGYEAQLRPRSGLALRSMISLPNTPATIDADYRGEVKVILINYGKEPFMVQHGDRIAQMVIARVEQVQFEEVAELSATVRGEGGFGHTGIASVQ.

Residues 65-67 (RSG), N78, 82-84 (TID), and K92 each bind substrate.

Belongs to the dUTPase family. Requires Mg(2+) as cofactor.

It carries out the reaction dUTP + H2O = dUMP + diphosphate + H(+). The protein operates within pyrimidine metabolism; dUMP biosynthesis; dUMP from dCTP (dUTP route): step 2/2. This enzyme is involved in nucleotide metabolism: it produces dUMP, the immediate precursor of thymidine nucleotides and it decreases the intracellular concentration of dUTP so that uracil cannot be incorporated into DNA. The protein is Deoxyuridine 5'-triphosphate nucleotidohydrolase of Chlorobium chlorochromatii (strain CaD3).